A 276-amino-acid chain; its full sequence is MTWHATLSLDYRLESERSVLRHVHDGPLRVLKSLYPQGDGTCHNVLVHPPGGLVGGDTLDIQIAVGAGAHALITTPGATRFYRSSGEPAVQRTRLRLEALARMEWLPLEAILYSGCQAENHLSFELAPGAELIAWDVTALGLPHAGLPFVRGRFCQHIELPGVWLERGVIDAADTRLLGSPLGLAGQRCMASLFFVTGSALERPRRDLALDGARQILQAHALQSSAGVTCPNPRVVVLRVLAPQVEMAMDLLKKVWAVWRQVLWNQAAVQPRIWAM.

It belongs to the UreD family. As to quaternary structure, ureD, UreF and UreG form a complex that acts as a GTP-hydrolysis-dependent molecular chaperone, activating the urease apoprotein by helping to assemble the nickel containing metallocenter of UreC. The UreE protein probably delivers the nickel.

It localises to the cytoplasm. Required for maturation of urease via the functional incorporation of the urease nickel metallocenter. This Albidiferax ferrireducens (strain ATCC BAA-621 / DSM 15236 / T118) (Rhodoferax ferrireducens) protein is Urease accessory protein UreD.